Reading from the N-terminus, the 616-residue chain is Dihydroxy-acid dehydratase (616 aa).

D81 provides a ligand contact to Mg(2+). C122 contacts [2Fe-2S] cluster. 2 residues coordinate Mg(2+): D123 and K124. K124 is modified (N6-carboxylysine). C195 serves as a coordination point for [2Fe-2S] cluster. E491 is a binding site for Mg(2+). S517 acts as the Proton acceptor in catalysis.

The protein belongs to the IlvD/Edd family. Homodimer. [2Fe-2S] cluster is required as a cofactor. Mg(2+) serves as cofactor.

The catalysed reaction is (2R)-2,3-dihydroxy-3-methylbutanoate = 3-methyl-2-oxobutanoate + H2O. The enzyme catalyses (2R,3R)-2,3-dihydroxy-3-methylpentanoate = (S)-3-methyl-2-oxopentanoate + H2O. The protein operates within amino-acid biosynthesis; L-isoleucine biosynthesis; L-isoleucine from 2-oxobutanoate: step 3/4. Its pathway is amino-acid biosynthesis; L-valine biosynthesis; L-valine from pyruvate: step 3/4. In terms of biological role, functions in the biosynthesis of branched-chain amino acids. Catalyzes the dehydration of (2R,3R)-2,3-dihydroxy-3-methylpentanoate (2,3-dihydroxy-3-methylvalerate) into 2-oxo-3-methylpentanoate (2-oxo-3-methylvalerate) and of (2R)-2,3-dihydroxy-3-methylbutanoate (2,3-dihydroxyisovalerate) into 2-oxo-3-methylbutanoate (2-oxoisovalerate), the penultimate precursor to L-isoleucine and L-valine, respectively. The chain is Dihydroxy-acid dehydratase from Salmonella dublin (strain CT_02021853).